Reading from the N-terminus, the 201-residue chain is MKRNWRQHYNVFLANLVLVFGFALNILVAKQSLNNTTPQFRFLFVTPFLGVVIGAVLYFFDVKWFLIDYPYKKFHFQKKWAIVYLSGVIVFFLNVLIGVVLLVVMVNYITNQILEREYERLFTNSLPYLWSTTGTSIVLSLISIGMSKTAHFFIDIEILKAKKGEPTDPNKTDNRAVVINLDENKKNEKEQSPPSAEMTSL.

A run of 4 helical transmembrane segments spans residues 9 to 29 (YNVFLANLVLVFGFALNILVA), 42 to 62 (FLFVTPFLGVVIGAVLYFFDV), 86 to 106 (SGVIVFFLNVLIGVVLLVVMV), and 126 to 146 (LPYLWSTTGTSIVLSLISIGM). Composition is skewed to basic and acidic residues over residues 165-174 (EPTDPNKTDN) and 182-191 (DENKKNEKEQ). The interval 165-201 (EPTDPNKTDNRAVVINLDENKKNEKEQSPPSAEMTSL) is disordered. Over residues 192–201 (SPPSAEMTSL) the composition is skewed to polar residues.

The protein resides in the cell membrane. This is an uncharacterized protein from Mycoplasma genitalium (strain ATCC 33530 / DSM 19775 / NCTC 10195 / G37) (Mycoplasmoides genitalium).